A 615-amino-acid chain; its full sequence is NEDD8 ultimate buster 1 (615 aa).

Coiled-coil stretches lie at residues 36-70 and 152-203; these read LALKDLAKQYSDRLECCENEVEKVIEEIRCKAIER and KAMV…AAET. 3 consecutive UBA domains span residues 374–413, 424–470, and 489–529; these read YIDPSKVDNLLQLGFTAQEARLGLRACDGNVDHAATHITN, EEKE…LLSN, and SPSQ…LAHN. The Nuclear localization signal signature appears at 414 to 431; the sequence is RREELAQIRKEEKEKKRR. The segment at 427–474 is NEDD8-binding 1; that stretch reads EKKRRRLENIRFLKGMGYSTHAAQQVLHAASGNLDEALKILLSNPQMW. The interval 532–586 is disordered; sequence SLPPELPLSPEDSLSPPATSPSDSAGTSSASTDEDMETEAVNEILEDIPEHEEDY. Over residues 539 to 562 the composition is skewed to low complexity; the sequence is LSPEDSLSPPATSPSDSAGTSSAS. Residues 550-598 form an NEDD8-binding 2 region; sequence TSPSDSAGTSSASTDEDMETEAVNEILEDIPEHEEDYLDSTLEDEEIII. Residues 563-586 are compositionally biased toward acidic residues; sequence TDEDMETEAVNEILEDIPEHEEDY.

In terms of assembly, directly interacts with NEDD8 and PSMD4/S5a, a member of the regulatory subunit of the 26S proteasome. Isoform 1 binds to NEDD8 more efficiently than isoform 2. Interacts with AIPL1. The interaction with UBD via UBA domains facilitates the linking of UBD-conjugated target protein to the proteasome complex and accelerates UBD degradation and that of its conjugates. As to expression, widely expressed with lowest expression in the pancreas for isoform 1 and in leukocytes, liver, prostate and skeletal muscle for isoform 2.

Its subcellular location is the nucleus. In terms of biological role, specific down-regulator of the NEDD8 conjugation system. Recruits NEDD8, UBD, and their conjugates to the proteasome for degradation. Isoform 1 promotes the degradation of NEDD8 more efficiently than isoform 2. In Homo sapiens (Human), this protein is NEDD8 ultimate buster 1 (NUB1).